The sequence spans 188 residues: Casparian strip membrane protein 1 (188 aa).

At 1-24 (MKAGALELGHASKTTKSGVNRGMS) the chain is on the cytoplasmic side. Residues 25–45 (ILDLFIRIIAIIATLGSAIAM) traverse the membrane as a helical segment. Residues 46 to 72 (GTTNETLPFFTQFVRFKAKYSDLPTFT) lie on the Extracellular side of the membrane. N-linked (GlcNAc...) asparagine glycosylation occurs at Asn49. Residues 73–93 (FFVVANAIVSAYLVLSLGLSI) traverse the membrane as a helical segment. The Cytoplasmic segment spans residues 94-105 (YHIMRSRAQATR). The helical transmembrane segment at 106 to 126 (IALIFFDAAMLGLLTGGASAS) threads the bilayer. Topologically, residues 127–159 (AAIVYLAHKGNRKTNWFPICQQYDSFCHRTSGS) are extracellular. Residues 160–180 (LVGSFAGSVLIILLIFLSAIA) form a helical membrane-spanning segment. Residues 181-188 (LSRQSLNH) are Cytoplasmic-facing.

It belongs to the Casparian strip membrane proteins (CASP) family. As to quaternary structure, homodimer and heterodimers.

It localises to the cell membrane. Functionally, regulates membrane-cell wall junctions and localized cell wall deposition. Required for establishment of the Casparian strip membrane domain (CSD) and the subsequent formation of Casparian strips, a cell wall modification of the root endodermis that determines an apoplastic barrier between the intraorganismal apoplasm and the extraorganismal apoplasm and prevents lateral diffusion. This Solanum tuberosum (Potato) protein is Casparian strip membrane protein 1.